Reading from the N-terminus, the 352-residue chain is Non-disjunction protein 1 (352 aa).

As to quaternary structure, interacts with MPS3.

The protein resides in the nucleus. It is found in the chromosome. It localises to the telomere. In terms of biological role, required for telomeric clustering (bouquet stage) during meiosis 1 prophase, formation and efficient homolog pairing, meiosis 1 disjunction, and telomere deletion during meiosis. Also promotes meiotic recombination. The chain is Non-disjunction protein 1 (NDJ1) from Saccharomyces cerevisiae (strain ATCC 204508 / S288c) (Baker's yeast).